The following is a 100-amino-acid chain: Osteocalcin (100 aa).

A signal peptide spans 1 to 23 (MRTPMLLALLALATLCLAGRADA). Residues 24–51 (KPGDAESGKGAAFVSKQEGSEVVKRLRR) constitute a propeptide that is removed on maturation. In terms of domain architecture, Gla spans 52–98 (YLDHWLGAPAPYPDPLEPKREVCELNPDCDELADHIGFQEAYRRFYG). Pro-60 bears the 4-hydroxyproline mark. Residues Glu-68, Glu-72, Glu-75, and Asp-81 each coordinate Ca(2+). 3 positions are modified to 4-carboxyglutamate: Glu-68, Glu-72, and Glu-75. Cysteines 74 and 80 form a disulfide.

Belongs to the osteocalcin/matrix Gla protein family. In terms of processing, gamma-carboxyglutamate residues are formed by vitamin K dependent carboxylation by GGCX. These residues are essential for the binding of calcium. Decarboxylation promotes the hormone activity.

It is found in the secreted. Its function is as follows. The carboxylated form is one of the main organic components of the bone matrix, which constitutes 1-2% of the total bone protein. It acts as a negative regulator of bone formation and is required to limit bone formation without impairing bone resorption or mineralization. The carboxylated form binds strongly to apatite and calcium. The uncarboxylated form acts as a hormone secreted by osteoblasts, which regulates different cellular processes, such as energy metabolism, male fertility and brain development. Regulates of energy metabolism by acting as a hormone favoring pancreatic beta-cell proliferation, insulin secretion and sensitivity and energy expenditure. Uncarboxylated osteocalcin hormone also promotes testosterone production in the testes: acts as a ligand for G protein-coupled receptor GPRC6A at the surface of Leydig cells, initiating a signaling response that promotes the expression of enzymes required for testosterone synthesis in a CREB-dependent manner. Also acts as a regulator of brain development: osteocalcin hormone crosses the blood-brain barrier and acts as a ligand for GPR158 on neurons, initiating a signaling response that prevents neuronal apoptosis in the hippocampus, favors the synthesis of all monoamine neurotransmitters and inhibits that of gamma-aminobutyric acid (GABA). Osteocalcin also crosses the placenta during pregnancy and maternal osteocalcin is required for fetal brain development. In Bos taurus (Bovine), this protein is Osteocalcin (BGLAP).